Consider the following 338-residue polypeptide: N-acetylmuramate/N-acetylglucosamine kinase (338 aa).

This sequence belongs to the kinase AmgK family.

It catalyses the reaction N-acetyl-D-muramate + ATP = N-acetyl-alpha-D-muramate 1-phosphate + ADP + H(+). The enzyme catalyses N-acetyl-D-glucosamine + ATP = N-acetyl-alpha-D-glucosamine 1-phosphate + ADP + H(+). It functions in the pathway cell wall biogenesis; peptidoglycan recycling. In terms of biological role, sugar kinase that catalyzes the ATP-dependent phosphorylation of N-acetylmuramate (MurNAc) and N-acetylglucosamine (GlcNAc) at its C1 hydroxyl group, leading to MurNAc alpha-1P and GlcNAc alpha-1P, respectively. Is involved in peptidoglycan recycling as part of a cell wall recycling pathway that bypasses de novo biosynthesis of the peptidoglycan precursor UDP-MurNAc. Plays a role in intrinsic resistance to fosfomycin, which targets the de novo synthesis of UDP-MurNAc. This Pseudomonas aeruginosa (strain ATCC 15692 / DSM 22644 / CIP 104116 / JCM 14847 / LMG 12228 / 1C / PRS 101 / PAO1) protein is N-acetylmuramate/N-acetylglucosamine kinase.